The sequence spans 743 residues: MELEKVKINSLHCNDAVLSSLQASPSATHPQSVPSKANAVTEASIIEKTNLQHNVQEDNSYNRDCDSPVSSSSEPEKELDDLRYLHSSSLTNSVVVGKSTGSLNGAYSITSVTSKTKTLEPNSASGSACLTIAPTADHIKKRIPSSRTPTRKALRIKFYRNGDRFYPGITIPVSNERYRSFERLFEDLTRLLEENVKIPGAVRTIYNMCGKKITSLDELEDGQSYVCSCNNENFKKVEYNTGSQPLSNLTLTSSRSNSHRLDKCRPSSPLKNGLLAGSSPLPTCGGGTGNGSPHIASRSSDRVTVVHPRIVTLIRSGTKPRRIMRLLLNKRNSPSFDHVLTAITQVVRLDTGYVRKVFTLSGVSVVRLSDFFGSDDVFFAYGTERINTAEDFKLEAEEHRAINVIRKTMRTTGTTCKGPKPKMPIKSKKVYPPVVDSEAFKAATTPEDDSHAALLTSTGMEINELPSNIRNTYTLGRIIGDGNFAIVFKIKHRQTGHSYALKIIDKNKCKGKEHYIDAEVRVMKKLNHPHIISLILSVDQNTNMYLVLEYVSGGDLFDAITQVTRFSESQSRIMIRHLGAAMTYLHSMGIVHRDIKPENLLVKLDEHGHVLELKLADFGLACEVNDLLYAVCGTPTYVAPEILLEVGYGLKIDVWAAGIILYILLCGFPPFVAPDNQQEPLFDAIISGIYEFPDPYWSDIGDGVRDLIANMLQADPDVRFTSEDILDHPWTIGNQNECTTYKR.

The tract at residues 54-78 is disordered; sequence NVQEDNSYNRDCDSPVSSSSEPEKE. Doublecortin domains are found at residues 154 to 240 and 309 to 392; these read LRIK…VEYN and RIVT…AEDF. Residues 473–731 form the Protein kinase domain; it reads YTLGRIIGDG…SEDILDHPWT (259 aa). Residues 479 to 487 and Lys-502 each bind ATP; that span reads IGDGNFAIV. The active-site Proton acceptor is Asp-594.

It belongs to the protein kinase superfamily. CAMK Ser/Thr protein kinase family. CaMK subfamily.

It carries out the reaction L-seryl-[protein] + ATP = O-phospho-L-seryl-[protein] + ADP + H(+). The catalysed reaction is L-threonyl-[protein] + ATP = O-phospho-L-threonyl-[protein] + ADP + H(+). This is Serine/threonine-protein kinase GD17699 from Drosophila simulans (Fruit fly).